Consider the following 124-residue polypeptide: Large ribosomal subunit protein bL19 (124 aa).

This sequence belongs to the bacterial ribosomal protein bL19 family.

Functionally, this protein is located at the 30S-50S ribosomal subunit interface and may play a role in the structure and function of the aminoacyl-tRNA binding site. This Dinoroseobacter shibae (strain DSM 16493 / NCIMB 14021 / DFL 12) protein is Large ribosomal subunit protein bL19.